A 302-amino-acid polypeptide reads, in one-letter code: uncharacterized protein (302 aa).

Disordered regions lie at residues 15–34, 143–195, and 221–246; these read RHSTIPSDTHTSREKPRFHK, GMPL…PSHL, and GSEARSLSLRRQESQPHSGSSRRESV. Positions 172 to 189 are enriched in basic and acidic residues; that stretch reads HSDENKATGQGRENRDQP.

This is an uncharacterized protein from Homo sapiens (Human).